Reading from the N-terminus, the 258-residue chain is 14-3-3-like protein 16R (258 aa).

The tract at residues 238–258 is disordered; that stretch reads DMQDDGTDEIKEAAPKPDNNE. Over residues 245–258 the composition is skewed to basic and acidic residues; sequence DEIKEAAPKPDNNE.

Belongs to the 14-3-3 family.

The protein is 14-3-3-like protein 16R of Solanum tuberosum (Potato).